The sequence spans 97 residues: Aspartyl/glutamyl-tRNA(Asn/Gln) amidotransferase subunit C (97 aa).

This sequence belongs to the GatC family. Heterotrimer of A, B and C subunits.

The catalysed reaction is L-glutamyl-tRNA(Gln) + L-glutamine + ATP + H2O = L-glutaminyl-tRNA(Gln) + L-glutamate + ADP + phosphate + H(+). It catalyses the reaction L-aspartyl-tRNA(Asn) + L-glutamine + ATP + H2O = L-asparaginyl-tRNA(Asn) + L-glutamate + ADP + phosphate + 2 H(+). In terms of biological role, allows the formation of correctly charged Asn-tRNA(Asn) or Gln-tRNA(Gln) through the transamidation of misacylated Asp-tRNA(Asn) or Glu-tRNA(Gln) in organisms which lack either or both of asparaginyl-tRNA or glutaminyl-tRNA synthetases. The reaction takes place in the presence of glutamine and ATP through an activated phospho-Asp-tRNA(Asn) or phospho-Glu-tRNA(Gln). In Prochlorococcus marinus (strain MIT 9215), this protein is Aspartyl/glutamyl-tRNA(Asn/Gln) amidotransferase subunit C.